Here is a 460-residue protein sequence, read N- to C-terminus: 3-ketoacyl-CoA synthase 7 (460 aa).

The helical transmembrane segment at 21-41 (FHQFLVASACVLIAVFGYYFF) threads the bilayer. The FAE domain occupies 38 to 328 (YYFFKPRCII…YIISFIQRKW (291 aa)). Active-site residues include Cys-183, His-262, His-345, His-349, and Asn-382.

This sequence belongs to the thiolase-like superfamily. Chalcone/stilbene synthases family. As to expression, expressed in flowers.

Its subcellular location is the membrane. It carries out the reaction a very-long-chain acyl-CoA + malonyl-CoA + H(+) = a very-long-chain 3-oxoacyl-CoA + CO2 + CoA. It participates in lipid metabolism; fatty acid biosynthesis. The protein is 3-ketoacyl-CoA synthase 7 of Arabidopsis thaliana (Mouse-ear cress).